Consider the following 161-residue polypeptide: Troponin C, slow skeletal and cardiac muscles (161 aa).

Methionine 1 is subject to N-acetylmethionine. 4 EF-hand domains span residues 16 to 51 (QKNE…LGQN), 52 to 87 (PTPE…CMKD), 92 to 127 (KSEE…TGET), and 128 to 161 (ITED…KGVE). Ca(2+) contacts are provided by aspartate 65, aspartate 67, serine 69, threonine 71, and glutamate 76. Serine 98 bears the Phosphoserine mark. Residues aspartate 105, asparagine 107, aspartate 109, tyrosine 111, glutamate 116, aspartate 141, asparagine 143, aspartate 145, arginine 147, and glutamate 152 each contribute to the Ca(2+) site.

Belongs to the troponin C family.

In terms of biological role, troponin is the central regulatory protein of striated muscle contraction. Tn consists of three components: Tn-I which is the inhibitor of actomyosin ATPase, Tn-T which contains the binding site for tropomyosin and Tn-C. The binding of calcium to Tn-C abolishes the inhibitory action of Tn on actin filaments. The chain is Troponin C, slow skeletal and cardiac muscles (Tnnc1) from Mus musculus (Mouse).